The sequence spans 466 residues: Asparagine--tRNA ligase (466 aa).

It belongs to the class-II aminoacyl-tRNA synthetase family. In terms of assembly, homodimer.

It is found in the cytoplasm. The catalysed reaction is tRNA(Asn) + L-asparagine + ATP = L-asparaginyl-tRNA(Asn) + AMP + diphosphate + H(+). The sequence is that of Asparagine--tRNA ligase from Yersinia enterocolitica serotype O:8 / biotype 1B (strain NCTC 13174 / 8081).